A 513-amino-acid chain; its full sequence is ATP synthase subunit alpha (513 aa).

169–176 (GDRQIGKT) is an ATP binding site.

The protein belongs to the ATPase alpha/beta chains family. As to quaternary structure, F-type ATPases have 2 components, CF(1) - the catalytic core - and CF(0) - the membrane proton channel. CF(1) has five subunits: alpha(3), beta(3), gamma(1), delta(1), epsilon(1). CF(0) has three main subunits: a(1), b(2) and c(9-12). The alpha and beta chains form an alternating ring which encloses part of the gamma chain. CF(1) is attached to CF(0) by a central stalk formed by the gamma and epsilon chains, while a peripheral stalk is formed by the delta and b chains.

Its subcellular location is the cell inner membrane. The enzyme catalyses ATP + H2O + 4 H(+)(in) = ADP + phosphate + 5 H(+)(out). Functionally, produces ATP from ADP in the presence of a proton gradient across the membrane. The alpha chain is a regulatory subunit. The sequence is that of ATP synthase subunit alpha from Francisella tularensis subsp. novicida (strain U112).